Here is a 546-residue protein sequence, read N- to C-terminus: Chaperonin GroEL 2 (546 aa).

Residues 30–33, Lys51, 87–91, Gly415, 479–481, and Asp495 each bind ATP; these read TLGP, DGTTT, and NAA. The tract at residues 524 to 546 is disordered; sequence APKDAPPAQPAGVPGAGGTGFDF. Positions 537-546 are enriched in gly residues; sequence PGAGGTGFDF.

Belongs to the chaperonin (HSP60) family. Forms a cylinder of 14 subunits composed of two heptameric rings stacked back-to-back. Interacts with the co-chaperonin GroES.

The protein localises to the cytoplasm. It carries out the reaction ATP + H2O + a folded polypeptide = ADP + phosphate + an unfolded polypeptide.. Its function is as follows. Together with its co-chaperonin GroES, plays an essential role in assisting protein folding. The GroEL-GroES system forms a nano-cage that allows encapsulation of the non-native substrate proteins and provides a physical environment optimized to promote and accelerate protein folding. The protein is Chaperonin GroEL 2 of Burkholderia thailandensis (strain ATCC 700388 / DSM 13276 / CCUG 48851 / CIP 106301 / E264).